The sequence spans 334 residues: B1 bradykinin receptor (334 aa).

Residues 1–21 form a disordered region; that stretch reads MASQASLKLQPSNQSQQAPPN. The Extracellular portion of the chain corresponds to 1–41; that stretch reads MASQASLKLQPSNQSQQAPPNITSCEGAPEAWDLLCRVLPG. The segment covering 10 to 21 has biased composition (low complexity); the sequence is QPSNQSQQAPPN. N-linked (GlcNAc...) asparagine glycosylation is found at asparagine 13 and asparagine 21. The helical transmembrane segment at 42–62 threads the bilayer; that stretch reads FVITVCFFGLLGNLLVLSFFL. The Cytoplasmic portion of the chain corresponds to 63-80; that stretch reads LPWRRWWQQRRQRLTIAE. Residues 81–101 traverse the membrane as a helical segment; that stretch reads IYLANLAASDLVFVLGLPFWA. Residues 102–118 lie on the Extracellular side of the membrane; it reads ENVGNRFNWPFGSDLCR. A disulfide bond links cysteine 117 and cysteine 196. A helical transmembrane segment spans residues 119–139; that stretch reads VVSGVIKANLFISIFLVVAIS. The Cytoplasmic segment spans residues 140 to 161; the sequence is QDRYRLLVYPMTSWGNRRRRQA. A helical membrane pass occupies residues 162 to 182; that stretch reads QVTCLLIWVAGGLLSTPTFLL. The Extracellular segment spans residues 183 to 214; it reads RSVKVVPDLNISACILLFPHEAWHFVRMVELN. Asparagine 192 is a glycosylation site (N-linked (GlcNAc...) asparagine). Residues 215 to 235 form a helical membrane-spanning segment; that stretch reads VLGFLLPLAAILYFNFHILAS. At 236 to 258 the chain is on the cytoplasmic side; that stretch reads LRGQKEASRTRCGGPKDSKTMGL. The helical transmembrane segment at 259–279 threads the bilayer; sequence ILTLVASFLVCWAPYHFFAFL. Residues 280-302 are Extracellular-facing; the sequence is DFLVQVRVIQDCFWKELTDLGLQ. Residues 303-323 traverse the membrane as a helical segment; that stretch reads LANFFAFVNSCLNPLIYVFAG. The Cytoplasmic segment spans residues 324–334; that stretch reads RLFKTRVLGTL.

Belongs to the G-protein coupled receptor 1 family. Bradykinin receptor subfamily. BDKRB1 sub-subfamily. Expressed in heart, liver and lung.

The protein resides in the cell membrane. Its function is as follows. This is a receptor for bradykinin. Could be a factor in chronic pain and inflammation. The chain is B1 bradykinin receptor (Bdkrb1) from Mus musculus (Mouse).